A 466-amino-acid chain; its full sequence is Pentatricopeptide repeat-containing protein At4g01400, mitochondrial (466 aa).

The transit peptide at 1–34 (MIRRPIYDFAAVFRHLTSPLSTSSRFLFYSSSEH) directs the protein to the mitochondrion. PPR repeat units follow at residues 118 to 152 (TGEI…NFTP), 153 to 188 (QPKH…GVMP), 189 to 223 (NTRS…DVVP), 224 to 258 (DVDS…GFVP), 259 to 293 (DRLS…GCNP), 294 to 328 (DLVH…GCSP), 329 to 363 (NSVS…GFSP), and 364 to 398 (HFSV…GETL).

The protein belongs to the PPR family. P subfamily.

It localises to the mitochondrion. This Arabidopsis thaliana (Mouse-ear cress) protein is Pentatricopeptide repeat-containing protein At4g01400, mitochondrial.